The following is a 184-amino-acid chain: Large ribosomal subunit protein uL5 (184 aa).

It belongs to the universal ribosomal protein uL5 family. Part of the 50S ribosomal subunit; part of the 5S rRNA/L5/L18/L25 subcomplex. Contacts the 5S rRNA and the P site tRNA. Forms a bridge to the 30S subunit in the 70S ribosome.

Functionally, this is one of the proteins that bind and probably mediate the attachment of the 5S RNA into the large ribosomal subunit, where it forms part of the central protuberance. In the 70S ribosome it contacts protein S13 of the 30S subunit (bridge B1b), connecting the 2 subunits; this bridge is implicated in subunit movement. Contacts the P site tRNA; the 5S rRNA and some of its associated proteins might help stabilize positioning of ribosome-bound tRNAs. The chain is Large ribosomal subunit protein uL5 from Ureaplasma urealyticum serovar 10 (strain ATCC 33699 / Western).